The following is a 31-amino-acid chain: Aspartate aminotransferase, cytoplasmic (31 aa).

Belongs to the class-I pyridoxal-phosphate-dependent aminotransferase family. Homodimer. Pyridoxal 5'-phosphate is required as a cofactor.

The protein localises to the cytoplasm. It carries out the reaction L-aspartate + 2-oxoglutarate = oxaloacetate + L-glutamate. The enzyme catalyses L-cysteine + 2-oxoglutarate = 2-oxo-3-sulfanylpropanoate + L-glutamate. It catalyses the reaction (2S)-2-aminobutanoate + 2-oxoglutarate = 2-oxobutanoate + L-glutamate. The catalysed reaction is 3-sulfino-L-alanine + 2-oxoglutarate = 3-sulfinopyruvate + L-glutamate. In terms of biological role, biosynthesis of L-glutamate from L-aspartate or L-cysteine. Important regulator of levels of glutamate, the major excitatory neurotransmitter of the vertebrate central nervous system. Acts as a scavenger of glutamate in brain neuroprotection. The aspartate aminotransferase activity is involved in hepatic glucose synthesis during development and in adipocyte glyceroneogenesis. Using L-cysteine as substrate, regulates levels of mercaptopyruvate, an important source of hydrogen sulfide. Mercaptopyruvate is converted into H(2)S via the action of 3-mercaptopyruvate sulfurtransferase (3MST). Hydrogen sulfide is an important synaptic modulator and neuroprotectant in the brain. The sequence is that of Aspartate aminotransferase, cytoplasmic from Oryctolagus cuniculus (Rabbit).